Here is a 509-residue protein sequence, read N- to C-terminus: uncharacterized protein (509 aa).

Residues 1 to 32 form the signal peptide; that stretch reads MMLPKRNIIHFLRKRAIFIVAAFIALLTVDYS.

It is found in the endoplasmic reticulum. This is an uncharacterized protein from Schizosaccharomyces pombe (strain 972 / ATCC 24843) (Fission yeast).